The sequence spans 215 residues: FMN-dependent NADH:quinone oxidoreductase (215 aa).

17-19 serves as a coordination point for FMN; it reads SAS.

It belongs to the azoreductase type 1 family. In terms of assembly, homodimer. Requires FMN as cofactor.

The catalysed reaction is 2 a quinone + NADH + H(+) = 2 a 1,4-benzosemiquinone + NAD(+). It carries out the reaction N,N-dimethyl-1,4-phenylenediamine + anthranilate + 2 NAD(+) = 2-(4-dimethylaminophenyl)diazenylbenzoate + 2 NADH + 2 H(+). Its function is as follows. Quinone reductase that provides resistance to thiol-specific stress caused by electrophilic quinones. Also exhibits azoreductase activity. Catalyzes the reductive cleavage of the azo bond in aromatic azo compounds to the corresponding amines. The polypeptide is FMN-dependent NADH:quinone oxidoreductase (Clostridium botulinum (strain Alaska E43 / Type E3)).